A 1165-amino-acid chain; its full sequence is DNA-directed RNA polymerase subunit beta (1165 aa).

It belongs to the RNA polymerase beta chain family. In terms of assembly, the RNAP catalytic core consists of 2 alpha, 1 beta, 1 beta' and 1 omega subunit. When a sigma factor is associated with the core the holoenzyme is formed, which can initiate transcription.

It carries out the reaction RNA(n) + a ribonucleoside 5'-triphosphate = RNA(n+1) + diphosphate. Its function is as follows. DNA-dependent RNA polymerase catalyzes the transcription of DNA into RNA using the four ribonucleoside triphosphates as substrates. This is DNA-directed RNA polymerase subunit beta from Leifsonia xyli subsp. xyli (strain CTCB07).